The sequence spans 430 residues: 3-phosphoshikimate 1-carboxyvinyltransferase (430 aa).

Residues Lys21, Ser22, and Arg26 each contribute to the 3-phosphoshikimate site. Lys21 contributes to the phosphoenolpyruvate binding site. Residues Gly95 and Arg123 each coordinate phosphoenolpyruvate. Residues Thr167, Gln169, Asp315, and Lys342 each contribute to the 3-phosphoshikimate site. A phosphoenolpyruvate-binding site is contributed by Gln169. Asp315 serves as the catalytic Proton acceptor. 2 residues coordinate phosphoenolpyruvate: Arg346 and Arg390.

The protein belongs to the EPSP synthase family. Monomer.

It localises to the cytoplasm. The catalysed reaction is 3-phosphoshikimate + phosphoenolpyruvate = 5-O-(1-carboxyvinyl)-3-phosphoshikimate + phosphate. Its pathway is metabolic intermediate biosynthesis; chorismate biosynthesis; chorismate from D-erythrose 4-phosphate and phosphoenolpyruvate: step 6/7. Functionally, catalyzes the transfer of the enolpyruvyl moiety of phosphoenolpyruvate (PEP) to the 5-hydroxyl of shikimate-3-phosphate (S3P) to produce enolpyruvyl shikimate-3-phosphate and inorganic phosphate. In Endomicrobium trichonymphae, this protein is 3-phosphoshikimate 1-carboxyvinyltransferase.